Consider the following 155-residue polypeptide: Transcription antitermination protein NusB (155 aa).

Belongs to the NusB family.

In terms of biological role, involved in transcription antitermination. Required for transcription of ribosomal RNA (rRNA) genes. Binds specifically to the boxA antiterminator sequence of the ribosomal RNA (rrn) operons. The sequence is that of Transcription antitermination protein NusB from Azoarcus sp. (strain BH72).